Reading from the N-terminus, the 223-residue chain is Deoxyribose-phosphate aldolase (223 aa).

The active-site Proton donor/acceptor is the Asp-89. Residue Lys-152 is the Schiff-base intermediate with acetaldehyde of the active site. The active-site Proton donor/acceptor is Lys-181.

This sequence belongs to the DeoC/FbaB aldolase family. DeoC type 1 subfamily.

It is found in the cytoplasm. It carries out the reaction 2-deoxy-D-ribose 5-phosphate = D-glyceraldehyde 3-phosphate + acetaldehyde. The protein operates within carbohydrate degradation; 2-deoxy-D-ribose 1-phosphate degradation; D-glyceraldehyde 3-phosphate and acetaldehyde from 2-deoxy-alpha-D-ribose 1-phosphate: step 2/2. Its function is as follows. Catalyzes a reversible aldol reaction between acetaldehyde and D-glyceraldehyde 3-phosphate to generate 2-deoxy-D-ribose 5-phosphate. This is Deoxyribose-phosphate aldolase from Bacillus cereus (strain ATCC 14579 / DSM 31 / CCUG 7414 / JCM 2152 / NBRC 15305 / NCIMB 9373 / NCTC 2599 / NRRL B-3711).